Consider the following 229-residue polypeptide: UPF0758 protein MA_1979 (229 aa).

Residues 106–228 (KICSPKDVYA…YVSLKDEGFV (123 aa)) enclose the MPN domain. Zn(2+) is bound by residues His-177, His-179, and Asp-190. A JAMM motif motif is present at residues 177–190 (HNHPSGDPSPSRED).

The protein belongs to the UPF0758 family.

The sequence is that of UPF0758 protein MA_1979 from Methanosarcina acetivorans (strain ATCC 35395 / DSM 2834 / JCM 12185 / C2A).